The following is a 255-amino-acid chain: Thiazole synthase (255 aa).

Residue Lys96 is the Schiff-base intermediate with DXP of the active site. Residues Gly157, 183–184 (AG), and 205–206 (NT) each bind 1-deoxy-D-xylulose 5-phosphate.

Belongs to the ThiG family. In terms of assembly, homotetramer. Forms heterodimers with either ThiH or ThiS.

The protein localises to the cytoplasm. The enzyme catalyses [ThiS sulfur-carrier protein]-C-terminal-Gly-aminoethanethioate + 2-iminoacetate + 1-deoxy-D-xylulose 5-phosphate = [ThiS sulfur-carrier protein]-C-terminal Gly-Gly + 2-[(2R,5Z)-2-carboxy-4-methylthiazol-5(2H)-ylidene]ethyl phosphate + 2 H2O + H(+). The protein operates within cofactor biosynthesis; thiamine diphosphate biosynthesis. Functionally, catalyzes the rearrangement of 1-deoxy-D-xylulose 5-phosphate (DXP) to produce the thiazole phosphate moiety of thiamine. Sulfur is provided by the thiocarboxylate moiety of the carrier protein ThiS. In vitro, sulfur can be provided by H(2)S. The protein is Thiazole synthase of Staphylococcus epidermidis (strain ATCC 12228 / FDA PCI 1200).